We begin with the raw amino-acid sequence, 637 residues long: Biosynthetic arginine decarboxylase (637 aa).

K101 carries the N6-(pyridoxal phosphate)lysine modification. 286–296 (FDVGGGLAVDY) is a substrate binding site.

Belongs to the Orn/Lys/Arg decarboxylase class-II family. SpeA subfamily. It depends on Mg(2+) as a cofactor. The cofactor is pyridoxal 5'-phosphate.

The enzyme catalyses L-arginine + H(+) = agmatine + CO2. It functions in the pathway amine and polyamine biosynthesis; agmatine biosynthesis; agmatine from L-arginine: step 1/1. Its function is as follows. Catalyzes the biosynthesis of agmatine from arginine. This is Biosynthetic arginine decarboxylase from Shewanella woodyi (strain ATCC 51908 / MS32).